The primary structure comprises 366 residues: Histidinol-phosphate aminotransferase 2 (366 aa).

Position 226 is an N6-(pyridoxal phosphate)lysine (Lys226).

It belongs to the class-II pyridoxal-phosphate-dependent aminotransferase family. Histidinol-phosphate aminotransferase subfamily. Homodimer. Pyridoxal 5'-phosphate serves as cofactor.

The enzyme catalyses L-histidinol phosphate + 2-oxoglutarate = 3-(imidazol-4-yl)-2-oxopropyl phosphate + L-glutamate. The protein operates within amino-acid biosynthesis; L-histidine biosynthesis; L-histidine from 5-phospho-alpha-D-ribose 1-diphosphate: step 7/9. The polypeptide is Histidinol-phosphate aminotransferase 2 (hisC2) (Haemophilus influenzae (strain ATCC 51907 / DSM 11121 / KW20 / Rd)).